Consider the following 272-residue polypeptide: Short-chain dehydrogenase/reductase iacC (272 aa).

Ile-13, Asp-59, and Asn-88 together coordinate NADP(+). Residues Ser-150 and Tyr-169 each act as proton donor in the active site. Positions 169, 173, and 202 each coordinate NADP(+). The active-site Lowers pKa of active site Tyr is the Lys-173.

This sequence belongs to the short-chain dehydrogenases/reductases (SDR) family.

The protein operates within secondary metabolite biosynthesis. Functionally, short-chain dehydrogenase/reductase; part of the gene cluster that mediates the biosynthesis of iso-A82775C, a enylepoxycyclohexane and biosynthetic precursor of the chloropestolide anticancer natural products. Within the cluster, the prenyltransferase iacE prenylates siccayne to generate pestalodiol E, using dimethylallyl diphosphate (DMAPP) as cosubstrate. The probable oxidoreductase iacF is then involved in the epoxidation of pestalodiol F to pestalodiol F, which is further converted to pestalofone A by the short-chain dehydrogenase/reductase iacG. Iso-A82775C is subsequently generated from pestalofone A by the short-chain dehydrogenase/reductase iacC. Iso-A82775C is further condensed with maldoxin via a Diels-Alder reaction to produce the anticancer natural products chloropestolides A to E. This chain is Short-chain dehydrogenase/reductase iacC, found in Pestalotiopsis fici (strain W106-1 / CGMCC3.15140).